The primary structure comprises 320 residues: MITHLKNWPRLLNRFVLQLKNARHSIHQFTHLAGRLQRPPKSGKSSRDPYLVTAVQGRSKKPRYPGERANQRFGEDSWFVSSTPLAEVMGVADGVGGWRDVGVDAGRFAKELMTCCSGQTQRSGFDGRSARNLLIAGFQELTHREQPVVGSSTACLATMHRRDCILYTANLGDSGFLVVRNGRVLHRSVEQTHDFNTPYQLTVPPADRQDCYYCDKPEMAVSTRHSLLPGDLVLLATDGLFDNMPESMLLKILNGLKERGERDLLQGASQVVEKARELSLNATFQSPFAIKARQHNVPYSGGGKPDDITLILASVEVPRA.

In terms of domain architecture, PPM-type phosphatase spans Pro49–Val315. Mn(2+) is bound by residues Asp93, Gly94, and Asp238.

Belongs to the PP2C family. It depends on Mg(2+) as a cofactor. The cofactor is Mn(2+).

It carries out the reaction O-phospho-L-seryl-[protein] + H2O = L-seryl-[protein] + phosphate. The enzyme catalyses O-phospho-L-threonyl-[protein] + H2O = L-threonyl-[protein] + phosphate. The protein is Protein phosphatase PTC7 homolog fig of Drosophila yakuba (Fruit fly).